We begin with the raw amino-acid sequence, 658 residues long: DNA mismatch repair protein MutL (658 aa).

The segment covering 114-130 (RQEDSSHATQVKAEDGK) has biased composition (basic and acidic residues). Disordered stretches follow at residues 114–138 (RQEDSSHATQVKAEDGKLSSPTAAA) and 355–405 (PSEN…HSLS).

This sequence belongs to the DNA mismatch repair MutL/HexB family.

Its function is as follows. This protein is involved in the repair of mismatches in DNA. It is required for dam-dependent methyl-directed DNA mismatch repair. May act as a 'molecular matchmaker', a protein that promotes the formation of a stable complex between two or more DNA-binding proteins in an ATP-dependent manner without itself being part of a final effector complex. The polypeptide is DNA mismatch repair protein MutL (Neisseria gonorrhoeae (strain ATCC 700825 / FA 1090)).